The chain runs to 118 residues: Small ribosomal subunit protein uS13 (118 aa).

A disordered region spans residues 94-118; it reads GLPVRGQRTKTNARTRKGPCKPIKK.

Belongs to the universal ribosomal protein uS13 family. In terms of assembly, part of the 30S ribosomal subunit. Forms a loose heterodimer with protein S19. Forms two bridges to the 50S subunit in the 70S ribosome.

In terms of biological role, located at the top of the head of the 30S subunit, it contacts several helices of the 16S rRNA. In the 70S ribosome it contacts the 23S rRNA (bridge B1a) and protein L5 of the 50S subunit (bridge B1b), connecting the 2 subunits; these bridges are implicated in subunit movement. Contacts the tRNAs in the A and P-sites. This is Small ribosomal subunit protein uS13 from Salmonella typhi.